The primary structure comprises 657 residues: LIM and SH3 domain protein Lasp (657 aa).

Residues 3–63 (KTCARCQKVV…EAHIPKAKAT (61 aa)) form the LIM zinc-binding domain. Nebulin repeat units lie at residues 64–95 (AIAD…KAKG) and 96–130 (KFTQ…KKAA). Disordered stretches follow at residues 130 to 151 (AMEK…EYFS), 164 to 223 (PTAS…PIQH), 235 to 257 (YQQL…QLHD), 294 to 318 (LYPT…QQQA), 332 to 415 (NSHH…SAAS), and 460 to 528 (KQHA…PKRI). Residues 140 to 150 (VSDSSNESEYF) are compositionally biased toward polar residues. Composition is skewed to low complexity over residues 172-215 (AATT…QQQT) and 236-254 (QQLQ…QQQQ). A compositionally biased stretch (polar residues) spans 332–341 (NSHHPSGNSV). Residues 342 to 357 (DQYDQPQQQQHQPQQQ) show a composition bias toward low complexity. Residues 358-370 (STNPTLVAAQQQQ) show a composition bias toward polar residues. Residues 371–403 (SHHSLLNNNASNGGISHSHHSNINNNGHGSQNQ) are compositionally biased toward low complexity. The span at 460 to 475 (KQHASNGHMPNQQQQH) shows a compositional bias: polar residues. S505 and S530 each carry phosphoserine. The segment at 548 to 592 (EQAHQQQKHQQYYQQVQMMQQQEHPPQQQQMRQQPSYSSLQEKQS) is disordered. Residues 549–586 (QAHQQQKHQQYYQQVQMMQQQEHPPQQQQMRQQPSYSS) show a composition bias toward low complexity. The SH3 domain maps to 596–657 (TAMRVYRAIY…PANYVEQAVI (62 aa)).

As to quaternary structure, interacts with osk.

The chain is LIM and SH3 domain protein Lasp from Drosophila melanogaster (Fruit fly).